The sequence spans 522 residues: Serine/threonine protein phosphatase 2A 59 kDa regulatory subunit B' gamma isoform (522 aa).

Residues 1 to 74 are disordered; the sequence is MIKQIFGKLP…SSTSSNRTNQ (74 aa). The segment covering 35-58 has biased composition (low complexity); that stretch reads PNSGISSISKPSSKSSASNSNGAN. A compositionally biased stretch (polar residues) spans 63–74; sequence APSSTSSNRTNQ.

This sequence belongs to the phosphatase 2A regulatory subunit B56 family. In terms of assembly, PP2A consists of a common heteromeric enzyme, composed of a catalytic subunit (subunits C), a constant regulatory subunit (subunit A), and a variety of regulatory subunits such as subunits B (the R2/B/PR55/B55, R3/B''/PR72/PR130/PR59 and R5/B'/B56 families). Interacts with BRI1. Interacts with IGMT1 and IGMT4. Interacts with ACO3 in the cytosol. As to expression, expressed ubiquitously at low levels. Expressed in roots, emerging lateral roots, cotyledons, leaves, floral stalks and flowers.

The protein localises to the cytoplasm. The protein resides in the cytosol. It is found in the nucleus. In terms of biological role, the B regulatory subunit may modulate substrate selectivity and catalytic activity, and may also direct the localization of the catalytic enzyme to a particular subcellular compartment. Required for the formation of the PP2A holoenzyme that negatively regulates brassinosteroid signaling by dephosphorylating and inactivating BRI1 in the cytoplasm. Seems to be functionally connected with CPR5 and may mediate the negative regulation of defense reactions and senescence under low irradiances. May contribute to the epigenetic regulation of defense gene expression. Involved in the control of methoxylation of indole glucosinolates and formation of 4-methoxy- indol-3-yl-methyl glucosinolate in leaves, through direct interaction with indole glucosinolate methyltransferases. Involved in growth regulation and stress signaling. Involved in the regulation of reactive oxygen species (ROS) signaling and maintenance of cellular ROS homeostasis. Required to control the level of ACO3 phosphorylation in the cytoplasm. Regulates hydrogen peroxide metabolism by controlling the abundance of AOX1A and AXO3/AOX1D in leaf mitochondria. May mediate dephosphorylation of CRT1 and promote the degradation of unfolded proteins in endoplasmic reticulum (ER). Involved in the regulation of flowering time by repressing FLC, the main flowering repressor gene. In Arabidopsis thaliana (Mouse-ear cress), this protein is Serine/threonine protein phosphatase 2A 59 kDa regulatory subunit B' gamma isoform (B'GAMMA).